The primary structure comprises 490 residues: Transcription factor lin-26 (490 aa).

Disordered regions lie at residues 96–176 (KYKD…PLHQ), 236–262 (TPEY…EPDS), and 302–326 (ASKP…KKHR). The segment at 101-110 (SSSPESPSTT) is PEST. Residues 101 to 120 (SSSPESPSTTASTAAQHTPP) are compositionally biased toward low complexity. Composition is skewed to polar residues over residues 123 to 132 (AVSTPTSINT) and 151 to 176 (NLST…PLHQ). The span at 236–260 (TPEYDDNHHSETISKASSEDLKTEP) shows a compositional bias: basic and acidic residues. Residues 353 to 381 (YKCALCGKPTTLNSTGSRWNLLRHVIMIH) form a C2H2-type; degenerate zinc finger.

In terms of tissue distribution, expressed in somatic gonads and germline precursors until the 50-cell stage. After the 100-cell stage, expression is seen in differentiating hypodermal and support cells (at protein level).

The protein localises to the nucleus. Functionally, probable transcription factor. Required to specify the fates of hypodermal and neuron-associated support cells. Functions during vulval development, playing a role in vulval precursor cell fate specification. Positively modulates expression of homeobox protein lin-39, perhaps by binding to regulatory regions of the lin-39 gene, acting in the vulval lineage. The chain is Transcription factor lin-26 from Caenorhabditis elegans.